A 282-amino-acid polypeptide reads, in one-letter code: Pantothenate synthetase (282 aa).

Met-30–His-37 contributes to the ATP binding site. His-37 acts as the Proton donor in catalysis. Gln-61 contributes to the (R)-pantoate binding site. Gln-61 serves as a coordination point for beta-alanine. An ATP-binding site is contributed by Gly-147–Asp-150. Gln-153 contributes to the (R)-pantoate binding site. ATP contacts are provided by residues Val-176 and Lys-184–Arg-187.

It belongs to the pantothenate synthetase family. In terms of assembly, homodimer.

The protein localises to the cytoplasm. The catalysed reaction is (R)-pantoate + beta-alanine + ATP = (R)-pantothenate + AMP + diphosphate + H(+). Its pathway is cofactor biosynthesis; (R)-pantothenate biosynthesis; (R)-pantothenate from (R)-pantoate and beta-alanine: step 1/1. In terms of biological role, catalyzes the condensation of pantoate with beta-alanine in an ATP-dependent reaction via a pantoyl-adenylate intermediate. The polypeptide is Pantothenate synthetase (Bacillus cereus (strain AH187)).